The chain runs to 376 residues: Glutamate 5-kinase (376 aa).

Residue lysine 15 coordinates ATP. Serine 56, aspartate 143, and asparagine 155 together coordinate substrate. 175 to 176 (SD) contributes to the ATP binding site. Residues 281-358 (KGTLTIDAGA…PDVMMILGIS (78 aa)) enclose the PUA domain.

Belongs to the glutamate 5-kinase family.

The protein localises to the cytoplasm. It carries out the reaction L-glutamate + ATP = L-glutamyl 5-phosphate + ADP. It functions in the pathway amino-acid biosynthesis; L-proline biosynthesis; L-glutamate 5-semialdehyde from L-glutamate: step 1/2. Its function is as follows. Catalyzes the transfer of a phosphate group to glutamate to form L-glutamate 5-phosphate. The polypeptide is Glutamate 5-kinase (Rhodopseudomonas palustris (strain BisB5)).